Reading from the N-terminus, the 301-residue chain is MLIHPNFDPVAIHLGPLAVRWYGLMYLVAFIAAIVVGRLRLRLPYVAAQGWTAKDIDDMLFYGVLGTILGGRLGYVLFYKASFYFAHPLDIFKVWEGGMSFHGGFLGVTLAMVLFAYQRKRSWLQVTDFVAPMVPTGLAAGRLGNFINGELWGRVTDPSAPWAMLFPGAAPDDAAWLAAHPQLAAQWHLNEVFAQYHMLPRHPSELYEIALEGVALFFVLFFFSRKPKPMGAISAVFLIGYGLARFTVEFAREPDDFLGLLAMGLSMGQWLSLPMILVGIGLLVWSYRRARREPAQAVSAS.

3 consecutive transmembrane segments (helical) span residues 17 to 37 (LAVR…IVVG), 59 to 79 (MLFY…VLFY), and 97 to 117 (GGMS…LFAY). Arginine 142 serves as a coordination point for a 1,2-diacyl-sn-glycero-3-phospho-(1'-sn-glycerol). The next 2 membrane-spanning stretches (helical) occupy residues 230 to 250 (MGAI…TVEF) and 265 to 285 (LSMG…LLVW).

The protein belongs to the Lgt family.

It is found in the cell inner membrane. It catalyses the reaction L-cysteinyl-[prolipoprotein] + a 1,2-diacyl-sn-glycero-3-phospho-(1'-sn-glycerol) = an S-1,2-diacyl-sn-glyceryl-L-cysteinyl-[prolipoprotein] + sn-glycerol 1-phosphate + H(+). The protein operates within protein modification; lipoprotein biosynthesis (diacylglyceryl transfer). Its function is as follows. Catalyzes the transfer of the diacylglyceryl group from phosphatidylglycerol to the sulfhydryl group of the N-terminal cysteine of a prolipoprotein, the first step in the formation of mature lipoproteins. This is Phosphatidylglycerol--prolipoprotein diacylglyceryl transferase from Paraburkholderia xenovorans (strain LB400).